We begin with the raw amino-acid sequence, 796 residues long: Endonuclease MutS2 (796 aa).

ATP is bound at residue 339–346 (GPNTGGKT). The disordered stretch occupies residues 620 to 644 (EKLGDTDSSLVSKAKKNRKQHKPSD). The Smr domain occupies 721–796 (LNIIGKRVDE…DHGVTIVEFK (76 aa)).

This sequence belongs to the DNA mismatch repair MutS family. MutS2 subfamily. Homodimer. Binds to stalled ribosomes, contacting rRNA.

Functionally, endonuclease that is involved in the suppression of homologous recombination and thus may have a key role in the control of bacterial genetic diversity. In terms of biological role, acts as a ribosome collision sensor, splitting the ribosome into its 2 subunits. Detects stalled/collided 70S ribosomes which it binds and splits by an ATP-hydrolysis driven conformational change. Acts upstream of the ribosome quality control system (RQC), a ribosome-associated complex that mediates the extraction of incompletely synthesized nascent chains from stalled ribosomes and their subsequent degradation. Probably generates substrates for RQC. This Lachnoclostridium phytofermentans (strain ATCC 700394 / DSM 18823 / ISDg) (Clostridium phytofermentans) protein is Endonuclease MutS2.